The following is a 173-amino-acid chain: Sialic acid TRAP transporter small permease protein SiaQ (173 aa).

Transmembrane regions (helical) follow at residues 13–33 (IEEIITVPLMAALLAVLTWQI), 46–66 (SEELARLLFMYMCLVGCAIAI), 87–107 (LSLVLSLEIAVLVSIGAIIVL), and 123–143 (LGISSSWMNYSLPVGGVFMVF).

The protein belongs to the TRAP transporter small permease family. The complex comprises the extracytoplasmic solute receptor protein SiaP, and the two transmembrane proteins SiaQ and SiaM. SiaQ and SiaM form a tight 1:1 complex.

The protein resides in the cell inner membrane. Functionally, part of the tripartite ATP-independent periplasmic (TRAP) transport system SiaPQM that catalyzes unidirectional Na(+)-dependent sialic acid uptake. The sequence is that of Sialic acid TRAP transporter small permease protein SiaQ from Vibrio cholerae serotype O1 (strain ATCC 39315 / El Tor Inaba N16961).